Reading from the N-terminus, the 526-residue chain is MCADTPHHPTPVHTEEAMAITLGELARTIGGELFNAPDQDLEIHNIGLDSSTLAKKAPIFAAVPGSRKHGAEFADTDRAAGALAVLTDRDGATILDRKGDTRPRLIVDDVREVLGVASSSVYGDPSRDLVLIGVTGTSGKTTTSYLLERGLMEAGYKVGLIGTTGTRIDGEPVPTKLTTPEAPTLQKLFYRMRQHGVTHVVMEVSSHALSLGRVSGSHFNVAAFTNLSQDHLDFHDTMEEYFDAKALFFRAGSPLAADHQVVCIDDEWGTRMAEVAGNAQTVATTGKRADFTAGLVTVKETGEQSFTVTVPDHGEVPVTLALPGAFNVANATLALAAAVRAGVDPVAFARGMAQVAVPGRMERIDEGQDFLAVVDYAHKPAAVAAVLDTLRTQIDGRLGVVIGAGGDRDATKRAPMGELSARRADLVIVTDDNPRSEVPATIRAAVMEGARRGAAEADHEVEVREIGDRAEAIRALIEWAGPGDGIVVAGKGHEVGQLIAGVTHHFDDREQVREALRHTQSDGEGK.

Positions 48 and 50 each coordinate UDP-N-acetyl-alpha-D-muramoyl-L-alanyl-D-glutamate. ATP is bound at residue 136-142 (GTSGKTT). UDP-N-acetyl-alpha-D-muramoyl-L-alanyl-D-glutamate is bound by residues 178 to 179 (TT), serine 205, and arginine 213. Residue lysine 245 is modified to N6-carboxylysine. Meso-2,6-diaminopimelate is bound by residues arginine 408, 432-435 (DNPR), glycine 490, and glutamate 494. The Meso-diaminopimelate recognition motif signature appears at 432-435 (DNPR).

This sequence belongs to the MurCDEF family. MurE subfamily. The cofactor is Mg(2+). Carboxylation is probably crucial for Mg(2+) binding and, consequently, for the gamma-phosphate positioning of ATP.

Its subcellular location is the cytoplasm. It carries out the reaction UDP-N-acetyl-alpha-D-muramoyl-L-alanyl-D-glutamate + meso-2,6-diaminopimelate + ATP = UDP-N-acetyl-alpha-D-muramoyl-L-alanyl-gamma-D-glutamyl-meso-2,6-diaminopimelate + ADP + phosphate + H(+). The protein operates within cell wall biogenesis; peptidoglycan biosynthesis. Catalyzes the addition of meso-diaminopimelic acid to the nucleotide precursor UDP-N-acetylmuramoyl-L-alanyl-D-glutamate (UMAG) in the biosynthesis of bacterial cell-wall peptidoglycan. This is UDP-N-acetylmuramoyl-L-alanyl-D-glutamate--2,6-diaminopimelate ligase from Corynebacterium efficiens (strain DSM 44549 / YS-314 / AJ 12310 / JCM 11189 / NBRC 100395).